The chain runs to 27 residues: MSKNTKSKNNGIRKYNAKTEVKLVYFK.

The polypeptide is Protein YqfI (Escherichia coli (strain K12)).